We begin with the raw amino-acid sequence, 650 residues long: Chaperone protein DnaK (650 aa).

Thr200 carries the phosphothreonine; by autocatalysis modification. The span at 611–634 shows a compositional bias: low complexity; the sequence is AQQAGAAGAAGAAAEGASAQGGAQ. Residues 611–650 form a disordered region; sequence AQQAGAAGAAGAAAEGASAQGGAQPPDDVVDADFKEVKKD.

This sequence belongs to the heat shock protein 70 family.

In terms of biological role, acts as a chaperone. The polypeptide is Chaperone protein DnaK (Burkholderia pseudomallei (strain 1710b)).